The following is a 273-amino-acid chain: Putative pyruvate, phosphate dikinase regulatory protein (273 aa).

149 to 156 (GPSRTSKT) provides a ligand contact to ADP.

Belongs to the pyruvate, phosphate/water dikinase regulatory protein family. PDRP subfamily.

The catalysed reaction is N(tele)-phospho-L-histidyl/L-threonyl-[pyruvate, phosphate dikinase] + ADP = N(tele)-phospho-L-histidyl/O-phospho-L-threonyl-[pyruvate, phosphate dikinase] + AMP + H(+). It carries out the reaction N(tele)-phospho-L-histidyl/O-phospho-L-threonyl-[pyruvate, phosphate dikinase] + phosphate + H(+) = N(tele)-phospho-L-histidyl/L-threonyl-[pyruvate, phosphate dikinase] + diphosphate. Functionally, bifunctional serine/threonine kinase and phosphorylase involved in the regulation of the pyruvate, phosphate dikinase (PPDK) by catalyzing its phosphorylation/dephosphorylation. The chain is Putative pyruvate, phosphate dikinase regulatory protein from Rickettsia bellii (strain OSU 85-389).